Consider the following 118-residue polypeptide: Vesicle-associated membrane protein 1 (118 aa).

A disordered region spans residues 1 to 36 (MSAPAQPPAEGTEGTAPGGGPPGPPPNMTSNRRLQQ). The Cytoplasmic segment spans residues 1–96 (MSAPAQPPAE…KRKYWWKNCK (96 aa)). Residues 33–93 (RLQQTQAQVE…AKLKRKYWWK (61 aa)) enclose the v-SNARE coiled-coil homology domain. Position 63 is a phosphoserine (serine 63). Residues 97 to 116 (MMIMLGAICAIIVVVIVIYF) traverse the membrane as a helical; Anchor for type IV membrane protein segment. Over 117-118 (FT) the chain is Vesicular.

This sequence belongs to the synaptobrevin family. As to quaternary structure, interacts with VAPA and VAPB. Post-translationally, (Microbial infection) Targeted and hydrolyzed by C.botulinum neurotoxin type B (BoNT/B, botB) which probably hydrolyzes the 78-Gln-|-Phe-79 bond and inhibits neurotransmitter release. In terms of processing, (Microbial infection) Targeted and hydrolyzed by C.botulinum neurotoxin type D (BoNT/D, botD) which probably hydrolyzes the 61-Arg-|-Leu-62 bond and inhibits neurotransmitter release. BoNT/D has low catalytic activity on this protein due to its sequence. Note that humans are not known to be infected by C.botulinum type D. (Microbial infection) Targeted and hydrolyzed by C.botulinum neurotoxin type F (BoNT/F, botF) which probably hydrolyzes the 60-Gln-|-Lys-61 bond and inhibits neurotransmitter release. Post-translationally, (Microbial infection) Targeted and hydrolyzed by C.botulinum neurotoxin type X (BoNT/X) which probably hydrolyzes the 68-Arg-|-Ala-69 bond and inhibits neurotransmitter release. It remains unknown whether BoNT/X is ever produced, or what organisms it targets. Nervous system, skeletal muscle and adipose tissue.

It localises to the cytoplasmic vesicle. Its subcellular location is the secretory vesicle. The protein resides in the synaptic vesicle membrane. It is found in the synapse. The protein localises to the synaptosome. It localises to the cytoplasmic vesicle membrane. Its subcellular location is the mitochondrion outer membrane. Its function is as follows. Involved in the targeting and/or fusion of transport vesicles to their target membrane. In Homo sapiens (Human), this protein is Vesicle-associated membrane protein 1 (VAMP1).